We begin with the raw amino-acid sequence, 308 residues long: Elongation factor Ts (308 aa).

An involved in Mg(2+) ion dislocation from EF-Tu region spans residues 80-83; it reads TDFV.

The protein belongs to the EF-Ts family.

It localises to the cytoplasm. Functionally, associates with the EF-Tu.GDP complex and induces the exchange of GDP to GTP. It remains bound to the aminoacyl-tRNA.EF-Tu.GTP complex up to the GTP hydrolysis stage on the ribosome. The protein is Elongation factor Ts of Rhodopseudomonas palustris (strain ATCC BAA-98 / CGA009).